Consider the following 273-residue polypeptide: Shikimate dehydrogenase (NADP(+)) (273 aa).

Residues 14 to 16 (SKS) and T61 contribute to the shikimate site. Catalysis depends on K65, which acts as the Proton acceptor. Position 77 (E77) interacts with NADP(+). Shikimate contacts are provided by N86 and D102. Residues 126-130 (GAGGA), 150-155 (NRTYEK), and M213 each bind NADP(+). Y215 contacts shikimate. NADP(+) is bound at residue G237.

The protein belongs to the shikimate dehydrogenase family. Homodimer.

The catalysed reaction is shikimate + NADP(+) = 3-dehydroshikimate + NADPH + H(+). The protein operates within metabolic intermediate biosynthesis; chorismate biosynthesis; chorismate from D-erythrose 4-phosphate and phosphoenolpyruvate: step 4/7. Involved in the biosynthesis of the chorismate, which leads to the biosynthesis of aromatic amino acids. Catalyzes the reversible NADPH linked reduction of 3-dehydroshikimate (DHSA) to yield shikimate (SA). The polypeptide is Shikimate dehydrogenase (NADP(+)) (Aliivibrio fischeri (strain MJ11) (Vibrio fischeri)).